A 642-amino-acid polypeptide reads, in one-letter code: Threonine--tRNA ligase (642 aa).

The TGS domain maps to 1-58; the sequence is MQVAGKELEVQQGALCGEVLKEALSKKQFKNVVVAKCGDTLLDLTTTVPADCTDLEPV. Residues 239–530 are catalytic; that stretch reads DHRKLGTQLD…LLEHTGGALP (292 aa). Zn(2+)-binding residues include Cys-331, His-382, and His-507.

It belongs to the class-II aminoacyl-tRNA synthetase family. In terms of assembly, homodimer. It depends on Zn(2+) as a cofactor.

It is found in the cytoplasm. It carries out the reaction tRNA(Thr) + L-threonine + ATP = L-threonyl-tRNA(Thr) + AMP + diphosphate + H(+). Its function is as follows. Catalyzes the attachment of threonine to tRNA(Thr) in a two-step reaction: L-threonine is first activated by ATP to form Thr-AMP and then transferred to the acceptor end of tRNA(Thr). Also edits incorrectly charged L-seryl-tRNA(Thr). The protein is Threonine--tRNA ligase of Maridesulfovibrio salexigens (strain ATCC 14822 / DSM 2638 / NCIMB 8403 / VKM B-1763) (Desulfovibrio salexigens).